The sequence spans 277 residues: Orotidine 5'-phosphate decarboxylase (277 aa).

Substrate-binding positions include Asp-40, Lys-62 to His-64, Asp-93 to Thr-102, Tyr-229, and Arg-247. The active-site Proton donor is Lys-95.

It belongs to the OMP decarboxylase family.

It carries out the reaction orotidine 5'-phosphate + H(+) = UMP + CO2. It participates in pyrimidine metabolism; UMP biosynthesis via de novo pathway; UMP from orotate: step 2/2. This Aspergillus kawachii (White koji mold) protein is Orotidine 5'-phosphate decarboxylase (pyrG).